Consider the following 269-residue polypeptide: Hydroxyethylthiazole kinase (269 aa).

Residue M46 participates in substrate binding. 2 residues coordinate ATP: R122 and T168. G195 lines the substrate pocket.

This sequence belongs to the Thz kinase family. Mg(2+) serves as cofactor.

It carries out the reaction 5-(2-hydroxyethyl)-4-methylthiazole + ATP = 4-methyl-5-(2-phosphooxyethyl)-thiazole + ADP + H(+). It participates in cofactor biosynthesis; thiamine diphosphate biosynthesis; 4-methyl-5-(2-phosphoethyl)-thiazole from 5-(2-hydroxyethyl)-4-methylthiazole: step 1/1. In terms of biological role, catalyzes the phosphorylation of the hydroxyl group of 4-methyl-5-beta-hydroxyethylthiazole (THZ). This Geobacillus kaustophilus (strain HTA426) protein is Hydroxyethylthiazole kinase.